We begin with the raw amino-acid sequence, 397 residues long: Protein Mx1 (397 aa).

It belongs to the TRAFAC class dynamin-like GTPase superfamily. Dynamin/Fzo/YdjA family.

This is Protein Mx1 (Mx1) from Mus musculus (Mouse).